A 399-amino-acid chain; its full sequence is Fe-coproporphyrin III synthase (399 aa).

The region spanning 36–253 (KDKKPVVVWN…TRKLHEKGFP (218 aa)) is the Radical SAM core domain. Positions 50, 54, and 57 each coordinate [4Fe-4S] cluster.

The protein belongs to the radical SAM superfamily. [4Fe-4S] cluster is required as a cofactor.

It carries out the reaction 12,18-didecarboxysiroheme + 2 AH2 + 2 S-adenosyl-L-methionine = Fe-coproporphyrin III + 2 5'-deoxyadenosine + 2 L-methionine + 2 acetate + 2 A + 2 H(+). Its pathway is porphyrin-containing compound metabolism; protoheme biosynthesis. In terms of biological role, involved in siroheme-dependent heme b biosynthesis. Catalyzes the conversion of didecarboxysiroheme into Fe-coproporphyrin III by oxidative loss of two acetic acid side chains. The chain is Fe-coproporphyrin III synthase from Methanosarcina barkeri (strain Fusaro / DSM 804).